Consider the following 851-residue polypeptide: DNA mismatch repair protein MutS (851 aa).

602-609 serves as a coordination point for ATP; it reads GPNMSGKS.

It belongs to the DNA mismatch repair MutS family.

Functionally, this protein is involved in the repair of mismatches in DNA. It is possible that it carries out the mismatch recognition step. This protein has a weak ATPase activity. This is DNA mismatch repair protein MutS from Streptococcus pyogenes serotype M6 (strain ATCC BAA-946 / MGAS10394).